We begin with the raw amino-acid sequence, 152 residues long: 3-dehydroquinate dehydratase (152 aa).

Tyr-26 (proton acceptor) is an active-site residue. Asn-77, His-83, and Asp-90 together coordinate substrate. Catalysis depends on His-103, which acts as the Proton donor. Substrate-binding positions include 104-105 (LS) and Arg-114.

This sequence belongs to the type-II 3-dehydroquinase family. In terms of assembly, homododecamer.

The catalysed reaction is 3-dehydroquinate = 3-dehydroshikimate + H2O. Its pathway is metabolic intermediate biosynthesis; chorismate biosynthesis; chorismate from D-erythrose 4-phosphate and phosphoenolpyruvate: step 3/7. Functionally, catalyzes a trans-dehydration via an enolate intermediate. In Tolumonas auensis (strain DSM 9187 / NBRC 110442 / TA 4), this protein is 3-dehydroquinate dehydratase.